Reading from the N-terminus, the 394-residue chain is Glycerol-1-phosphate dehydrogenase [NAD(P)+] (394 aa).

Residues Asp-54, 116 to 120 (GTIHD), and 138 to 141 (TAPS) each bind NAD(+). Asp-143 provides a ligand contact to substrate. Residue Ser-147 participates in NAD(+) binding. Residue Asp-190 participates in substrate binding. Ni(2+)-binding residues include Asp-190 and His-270. His-274 provides a ligand contact to substrate. His-290 contacts Ni(2+).

It belongs to the glycerol-1-phosphate dehydrogenase family. In terms of assembly, homodimer. Requires Ni(2+) as cofactor.

Its subcellular location is the cytoplasm. It carries out the reaction sn-glycerol 1-phosphate + NAD(+) = dihydroxyacetone phosphate + NADH + H(+). It catalyses the reaction sn-glycerol 1-phosphate + NADP(+) = dihydroxyacetone phosphate + NADPH + H(+). Catalyzes the NAD(P)H-dependent reduction of dihydroxyacetonephosphate (DHAP or glycerone phosphate) to glycerol 1-phosphate (G1P). The G1P thus generated is probably used for the synthesis of phosphoglycerolipids in Gram-positive bacterial species. Prefers NADH over NADPH as coenzyme. Is also able to catalyze the reverse reaction, i.e. the NAD(+)-dependent oxidation of G1P but not of G3P. Does not possess glycerol dehydrogenase activity. The chain is Glycerol-1-phosphate dehydrogenase [NAD(P)+] (egsA) from Bacillus subtilis (strain 168).